A 302-amino-acid chain; its full sequence is Glutaminase (302 aa).

7 residues coordinate substrate: Ser-61, Asn-111, Glu-155, Asn-162, Tyr-186, Tyr-238, and Val-256.

The protein belongs to the glutaminase family. As to quaternary structure, homotetramer.

It carries out the reaction L-glutamine + H2O = L-glutamate + NH4(+). The polypeptide is Glutaminase (Pseudomonas syringae pv. tomato (strain ATCC BAA-871 / DC3000)).